Consider the following 119-residue polypeptide: FAD-linked sulfhydryl oxidase (119 aa).

The ERV/ALR sulfhydryl oxidase domain occupies 1–97 (MLHWGPKFWR…ISWSEYKNIY (97 aa)). Cys-44 and Cys-47 are oxidised to a cystine.

It belongs to the asfivirus B119L family. As to quaternary structure, interacts with A151R. It depends on FAD as a cofactor.

Its subcellular location is the host cytoplasm. The protein localises to the virion. The catalysed reaction is 2 R'C(R)SH + O2 = R'C(R)S-S(R)CR' + H2O2. FAD-dependent sulfhydryl oxidase that catalyzes the formation of disulfide bonds in viral proteins produced in the cell cytoplasm. This chain is FAD-linked sulfhydryl oxidase, found in Ornithodoros (relapsing fever ticks).